The primary structure comprises 258 residues: GPI alpha-1,4-mannosyltransferase I, stabilizing subunit (258 aa).

Residues 1-21 (MAARVAAVRAAAWLLLGAATG) form the signal peptide. Residues 22–230 (LTRGPAAAFT…PVGLTVHTSL (209 aa)) are Lumenal-facing. An N-linked (GlcNAc...) asparagine glycan is attached at Asn-103. The chain crosses the membrane as a helical span at residues 231–251 (VCSVTLLITILCSTLILVAVF). Over 252–258 (KYGHFSL) the chain is Cytoplasmic.

It belongs to the PIGX family. Part of the glycosylphosphatidylinositol-mannosyltransferase I complex that is composed of PIGM and PIGX. Interacts with PIGM; PIGX stabilizes PIGM.

Its subcellular location is the endoplasmic reticulum membrane. It functions in the pathway glycolipid biosynthesis; glycosylphosphatidylinositol-anchor biosynthesis. In terms of biological role, stabilizing subunit of the glycosylphosphatidylinositol-mannosyltransferase I complex which catalyzes the transfer of the first mannose, via an alpha-1,4 bond from a dolichol-phosphate-mannose (Dol-P-Man) to the glucosaminyl acyl phosphatidylinositol (GlcN-(acyl)PI) intermediate to generate alpha-D-Man-(1-&gt;4)-alpha-D-GlcN-(1-&gt;6)-(1-radyl,2-acyl-sn-glycero-3-phospho)-2-acyl-inositol and participates in the sixth step of the glycosylphosphatidylinositol-anchor biosynthesis. Probably acts by stabilizing the mannosyltransferase PIGM. This Homo sapiens (Human) protein is GPI alpha-1,4-mannosyltransferase I, stabilizing subunit.